A 454-amino-acid chain; its full sequence is Bifunctional protein GlmU (454 aa).

Residues 1–228 form a pyrophosphorylase region; sequence MTLPLHVVIL…PQDVEGANDP (228 aa). UDP-N-acetyl-alpha-D-glucosamine contacts are provided by residues 10 to 13, Lys24, Gln76, 81 to 82, 103 to 105, Gly138, Glu153, Asn168, and Asn226; these read LAAG, GT, and YGD. Asp105 serves as a coordination point for Mg(2+). Residue Asn226 participates in Mg(2+) binding. The interval 229–249 is linker; it reads WQLAQLERAWQLRAARALCLQ. The interval 250–454 is N-acetyltransferase; sequence GVRMADPARV…IEGWERPKKK (205 aa). Positions 332 and 350 each coordinate UDP-N-acetyl-alpha-D-glucosamine. His362 acts as the Proton acceptor in catalysis. Positions 365 and 376 each coordinate UDP-N-acetyl-alpha-D-glucosamine. Residues Ala379, 385 to 386, Ser404, Ala422, and Arg439 each bind acetyl-CoA; that span reads NY.

In the N-terminal section; belongs to the N-acetylglucosamine-1-phosphate uridyltransferase family. It in the C-terminal section; belongs to the transferase hexapeptide repeat family. In terms of assembly, homotrimer. Requires Mg(2+) as cofactor.

Its subcellular location is the cytoplasm. The enzyme catalyses alpha-D-glucosamine 1-phosphate + acetyl-CoA = N-acetyl-alpha-D-glucosamine 1-phosphate + CoA + H(+). It carries out the reaction N-acetyl-alpha-D-glucosamine 1-phosphate + UTP + H(+) = UDP-N-acetyl-alpha-D-glucosamine + diphosphate. It functions in the pathway nucleotide-sugar biosynthesis; UDP-N-acetyl-alpha-D-glucosamine biosynthesis; N-acetyl-alpha-D-glucosamine 1-phosphate from alpha-D-glucosamine 6-phosphate (route II): step 2/2. It participates in nucleotide-sugar biosynthesis; UDP-N-acetyl-alpha-D-glucosamine biosynthesis; UDP-N-acetyl-alpha-D-glucosamine from N-acetyl-alpha-D-glucosamine 1-phosphate: step 1/1. Its pathway is bacterial outer membrane biogenesis; LPS lipid A biosynthesis. In terms of biological role, catalyzes the last two sequential reactions in the de novo biosynthetic pathway for UDP-N-acetylglucosamine (UDP-GlcNAc). The C-terminal domain catalyzes the transfer of acetyl group from acetyl coenzyme A to glucosamine-1-phosphate (GlcN-1-P) to produce N-acetylglucosamine-1-phosphate (GlcNAc-1-P), which is converted into UDP-GlcNAc by the transfer of uridine 5-monophosphate (from uridine 5-triphosphate), a reaction catalyzed by the N-terminal domain. This is Bifunctional protein GlmU from Xanthomonas campestris pv. campestris (strain 8004).